A 147-amino-acid polypeptide reads, in one-letter code: UPF0306 protein YhbP (147 aa).

This sequence belongs to the UPF0306 family.

This chain is UPF0306 protein YhbP, found in Shigella sonnei (strain Ss046).